Reading from the N-terminus, the 296-residue chain is ATP synthase gamma chain (296 aa).

Belongs to the ATPase gamma chain family. In terms of assembly, F-type ATPases have 2 components, CF(1) - the catalytic core - and CF(0) - the membrane proton channel. CF(1) has five subunits: alpha(3), beta(3), gamma(1), delta(1), epsilon(1). CF(0) has three main subunits: a, b and c.

The protein localises to the cell inner membrane. Functionally, produces ATP from ADP in the presence of a proton gradient across the membrane. The gamma chain is believed to be important in regulating ATPase activity and the flow of protons through the CF(0) complex. The protein is ATP synthase gamma chain of Methylorubrum extorquens (strain CM4 / NCIMB 13688) (Methylobacterium extorquens).